The sequence spans 154 residues: Probable chemoreceptor glutamine deamidase CheD (154 aa).

The protein belongs to the CheD family.

It catalyses the reaction L-glutaminyl-[protein] + H2O = L-glutamyl-[protein] + NH4(+). Probably deamidates glutamine residues to glutamate on methyl-accepting chemotaxis receptors (MCPs), playing an important role in chemotaxis. The polypeptide is Probable chemoreceptor glutamine deamidase CheD (Methanococcus maripaludis (strain DSM 14266 / JCM 13030 / NBRC 101832 / S2 / LL)).